The sequence spans 315 residues: Methionyl-tRNA formyltransferase (315 aa).

113-116 (SLLP) lines the (6S)-5,6,7,8-tetrahydrofolate pocket.

It belongs to the Fmt family.

The catalysed reaction is L-methionyl-tRNA(fMet) + (6R)-10-formyltetrahydrofolate = N-formyl-L-methionyl-tRNA(fMet) + (6S)-5,6,7,8-tetrahydrofolate + H(+). Functionally, attaches a formyl group to the free amino group of methionyl-tRNA(fMet). The formyl group appears to play a dual role in the initiator identity of N-formylmethionyl-tRNA by promoting its recognition by IF2 and preventing the misappropriation of this tRNA by the elongation apparatus. In Pseudoalteromonas atlantica (strain T6c / ATCC BAA-1087), this protein is Methionyl-tRNA formyltransferase.